A 332-amino-acid chain; its full sequence is Eukaryotic translation initiation factor 3 subunit H (332 aa).

In terms of domain architecture, MPN spans 18–153 (VQVDGLTVLK…LKAFRLSDEM (136 aa)). The interval 251-285 (QQQKENYLQRRQQENQSRIQRGEDPLPDEDLSKMF) is disordered.

This sequence belongs to the eIF-3 subunit H family. Component of the eukaryotic translation initiation factor 3 (eIF-3) complex.

The protein resides in the cytoplasm. Functionally, component of the eukaryotic translation initiation factor 3 (eIF-3) complex, which is involved in protein synthesis of a specialized repertoire of mRNAs and, together with other initiation factors, stimulates binding of mRNA and methionyl-tRNAi to the 40S ribosome. The eIF-3 complex specifically targets and initiates translation of a subset of mRNAs involved in cell proliferation. This Nematostella vectensis (Starlet sea anemone) protein is Eukaryotic translation initiation factor 3 subunit H.